The sequence spans 219 residues: UPF0502 protein Gmet_0262 (219 aa).

The protein belongs to the UPF0502 family.

The polypeptide is UPF0502 protein Gmet_0262 (Geobacter metallireducens (strain ATCC 53774 / DSM 7210 / GS-15)).